Consider the following 350-residue polypeptide: Phenylalanine--tRNA ligase alpha subunit (350 aa).

Mg(2+) is bound at residue E257.

The protein belongs to the class-II aminoacyl-tRNA synthetase family. Phe-tRNA synthetase alpha subunit type 1 subfamily. Tetramer of two alpha and two beta subunits. Mg(2+) is required as a cofactor.

Its subcellular location is the cytoplasm. It catalyses the reaction tRNA(Phe) + L-phenylalanine + ATP = L-phenylalanyl-tRNA(Phe) + AMP + diphosphate + H(+). The polypeptide is Phenylalanine--tRNA ligase alpha subunit (Listeria welshimeri serovar 6b (strain ATCC 35897 / DSM 20650 / CCUG 15529 / CIP 8149 / NCTC 11857 / SLCC 5334 / V8)).